The following is a 967-amino-acid chain: Phosphoenolpyruvate carboxylase 2 (967 aa).

Residue S13 is modified to Phosphoserine. Active-site residues include H174 and K602.

This sequence belongs to the PEPCase type 1 family. In terms of assembly, homotetramer. Mg(2+) serves as cofactor.

Its subcellular location is the cytoplasm. The enzyme catalyses oxaloacetate + phosphate = phosphoenolpyruvate + hydrogencarbonate. It functions in the pathway photosynthesis; C3 acid pathway. By light-reversible phosphorylation. Its function is as follows. Through the carboxylation of phosphoenolpyruvate (PEP) it forms oxaloacetate, a four-carbon dicarboxylic acid source for the tricarboxylic acid cycle. The chain is Phosphoenolpyruvate carboxylase 2 (PEP4) from Zea mays (Maize).